We begin with the raw amino-acid sequence, 338 residues long: Heat-inducible transcription repressor HrcA (338 aa).

Belongs to the HrcA family.

In terms of biological role, negative regulator of class I heat shock genes (grpE-dnaK-dnaJ and groELS operons). Prevents heat-shock induction of these operons. The sequence is that of Heat-inducible transcription repressor HrcA from Nitrosomonas europaea (strain ATCC 19718 / CIP 103999 / KCTC 2705 / NBRC 14298).